The sequence spans 607 residues: Lipid-A-disaccharide synthase (607 aa).

The segment at 1–224 (MFPQKITLWL…ASREAFRKPF (224 aa)) is unknown. The lipid-A-disaccharide synthase stretch occupies residues 225–607 (SNSCFISAGE…CLSLIFETAS (383 aa)).

The protein in the C-terminal section; belongs to the LpxB family.

It carries out the reaction a lipid X + a UDP-2-N,3-O-bis[(3R)-3-hydroxyacyl]-alpha-D-glucosamine = a lipid A disaccharide + UDP + H(+). It participates in bacterial outer membrane biogenesis; LPS lipid A biosynthesis. In terms of biological role, condensation of UDP-2,3-diacylglucosamine and 2,3-diacylglucosamine-1-phosphate to form lipid A disaccharide, a precursor of lipid A, a phosphorylated glycolipid that anchors the lipopolysaccharide to the outer membrane of the cell. This Chlamydia trachomatis serovar A (strain ATCC VR-571B / DSM 19440 / HAR-13) protein is Lipid-A-disaccharide synthase (lpxB).